Here is a 439-residue protein sequence, read N- to C-terminus: Ribosomal protein uS12 methylthiotransferase RimO (439 aa).

Positions 5–116 constitute an MTTase N-terminal domain; that stretch reads PTIAISHLGC…IVNVIERVEL (112 aa). The [4Fe-4S] cluster site is built by C14, C50, C79, C154, C158, and C161. A Radical SAM core domain is found at 140–369; that stretch reads TTTEGVAYLR…MELQQPISQK (230 aa). The 67-residue stretch at 372-438 folds into the TRAM domain; it reads QQEVGKIVDV…TYDLYGQVVN (67 aa).

It belongs to the methylthiotransferase family. RimO subfamily. [4Fe-4S] cluster is required as a cofactor.

Its subcellular location is the cytoplasm. The enzyme catalyses L-aspartate(89)-[ribosomal protein uS12]-hydrogen + (sulfur carrier)-SH + AH2 + 2 S-adenosyl-L-methionine = 3-methylsulfanyl-L-aspartate(89)-[ribosomal protein uS12]-hydrogen + (sulfur carrier)-H + 5'-deoxyadenosine + L-methionine + A + S-adenosyl-L-homocysteine + 2 H(+). In terms of biological role, catalyzes the methylthiolation of an aspartic acid residue of ribosomal protein uS12. This Nostoc punctiforme (strain ATCC 29133 / PCC 73102) protein is Ribosomal protein uS12 methylthiotransferase RimO.